Consider the following 161-residue polypeptide: Large ribosomal subunit protein bL17 (161 aa).

A compositionally biased stretch (basic and acidic residues) spans 132–144; the sequence is ARAKRAEDNRKAL. The interval 132-161 is disordered; that stretch reads ARAKRAEDNRKALEAQQAQAEAETTGETKA. Residues 145–161 are compositionally biased toward low complexity; it reads EAQQAQAEAETTGETKA.

The protein belongs to the bacterial ribosomal protein bL17 family. Part of the 50S ribosomal subunit. Contacts protein L32.

This Koribacter versatilis (strain Ellin345) protein is Large ribosomal subunit protein bL17.